Reading from the N-terminus, the 398-residue chain is Elongation factor Tu (398 aa).

The tr-type G domain occupies 10–207 (KPHVNIGTIG…TVDEYIPEPE (198 aa)). Positions 19–26 (GHVDHGKT) are G1. Residue 19-26 (GHVDHGKT) coordinates GTP. Threonine 26 contacts Mg(2+). Residues 63–67 (GITIN) are G2. Residues 84-87 (DAPG) are G3. GTP is bound by residues 84-88 (DAPGH) and 139-142 (NKVD). Residues 139 to 142 (NKVD) are G4. Residues 177 to 179 (SAL) form a G5 region.

This sequence belongs to the TRAFAC class translation factor GTPase superfamily. Classic translation factor GTPase family. EF-Tu/EF-1A subfamily. As to quaternary structure, monomer.

Its subcellular location is the cytoplasm. It carries out the reaction GTP + H2O = GDP + phosphate + H(+). Functionally, GTP hydrolase that promotes the GTP-dependent binding of aminoacyl-tRNA to the A-site of ribosomes during protein biosynthesis. This is Elongation factor Tu from Streptococcus pneumoniae serotype 4 (strain ATCC BAA-334 / TIGR4).